The sequence spans 342 residues: tRNA N6-adenosine threonylcarbamoyltransferase (342 aa).

Fe cation-binding residues include H111 and H115. Substrate contacts are provided by residues 133–137, D166, G179, D183, and N272; that span reads AVSGG. Fe cation is bound at residue D300.

This sequence belongs to the KAE1 / TsaD family. The cofactor is Fe(2+).

The protein localises to the cytoplasm. It catalyses the reaction L-threonylcarbamoyladenylate + adenosine(37) in tRNA = N(6)-L-threonylcarbamoyladenosine(37) in tRNA + AMP + H(+). Required for the formation of a threonylcarbamoyl group on adenosine at position 37 (t(6)A37) in tRNAs that read codons beginning with adenine. Is involved in the transfer of the threonylcarbamoyl moiety of threonylcarbamoyl-AMP (TC-AMP) to the N6 group of A37, together with TsaE and TsaB. TsaD likely plays a direct catalytic role in this reaction. The sequence is that of tRNA N6-adenosine threonylcarbamoyltransferase from Geobacter sp. (strain M21).